We begin with the raw amino-acid sequence, 332 residues long: Ribosomal RNA small subunit methyltransferase H (332 aa).

S-adenosyl-L-methionine is bound by residues 36–38 (GGY), Asp54, Phe81, Asp102, and Gln109. The disordered stretch occupies residues 295 to 322 (PRARSAKLRGAERTESPAHAAGDLPGWP).

The protein belongs to the methyltransferase superfamily. RsmH family.

It is found in the cytoplasm. The enzyme catalyses cytidine(1402) in 16S rRNA + S-adenosyl-L-methionine = N(4)-methylcytidine(1402) in 16S rRNA + S-adenosyl-L-homocysteine + H(+). Specifically methylates the N4 position of cytidine in position 1402 (C1402) of 16S rRNA. This Rhodopseudomonas palustris (strain ATCC BAA-98 / CGA009) protein is Ribosomal RNA small subunit methyltransferase H.